The sequence spans 130 residues: MAKVPSRSPRKRVRKQVADGMAHIHASFNNTIVTITDRQGNALSWATSGGSGFRGSRKSTPFAAQVAAERAGAAAQDYGLKNLEVFVKGPGPGRESAIRALNAVGYKITNITDVTPIPHNGCRPPKKRRV.

The protein belongs to the universal ribosomal protein uS11 family. As to quaternary structure, part of the 30S ribosomal subunit. Interacts with proteins S7 and S18. Binds to IF-3.

Functionally, located on the platform of the 30S subunit, it bridges several disparate RNA helices of the 16S rRNA. Forms part of the Shine-Dalgarno cleft in the 70S ribosome. This Shewanella baltica (strain OS223) protein is Small ribosomal subunit protein uS11.